The chain runs to 88 residues: Toxin RelE2 (88 aa).

The protein belongs to the RelE toxin family.

Its function is as follows. Toxic component of a type II toxin-antitoxin (TA) system. Its toxic effect is neutralized by coexpression with cognate antitoxin RelB2 but no other ParD or RelB antitoxin. This chain is Toxin RelE2 (relE2), found in Caulobacter vibrioides (strain ATCC 19089 / CIP 103742 / CB 15) (Caulobacter crescentus).